The primary structure comprises 403 residues: Alkaline protease 1 (403 aa).

The signal sequence occupies residues 1–21 (MQSIKRTLLLLGALLPAALAA). Residues 22 to 125 (PAREPHPSSN…QIWYLDALTT (104 aa)) constitute a propeptide that is removed on maturation. An Inhibitor I9 domain is found at 36 to 120 (KYIITFKSGI…HVEEDQIWYL (85 aa)). Positions 130–403 (PWGLGSISHK…PNKLAYNGAA (274 aa)) constitute a Peptidase S8 domain. Residues Asp-162 and His-193 each act as charge relay system in the active site. Residues Asn-253 and Asn-307 are each glycosylated (N-linked (GlcNAc...) asparagine). Ser-349 (charge relay system) is an active-site residue.

It belongs to the peptidase S8 family.

The protein resides in the secreted. The enzyme catalyses Hydrolysis of proteins with broad specificity, and of Bz-Arg-OEt &gt; Ac-Tyr-OEt. Does not hydrolyze peptide amides.. Functionally, secreted alkaline protease that allows assimilation of proteinaceous substrates. This is Alkaline protease 1 (alp1) from Aspergillus clavatus (strain ATCC 1007 / CBS 513.65 / DSM 816 / NCTC 3887 / NRRL 1 / QM 1276 / 107).